We begin with the raw amino-acid sequence, 453 residues long: Homogentisate 1,2-dioxygenase (453 aa).

H306 acts as the Proton acceptor in catalysis. Fe cation-binding residues include H349 and E355. Residues Y364 and H385 each coordinate homogentisate. Fe cation is bound at residue H385.

The protein belongs to the homogentisate dioxygenase family. In terms of assembly, hexamer; dimer of trimers. Requires Fe cation as cofactor.

It carries out the reaction homogentisate + O2 = 4-maleylacetoacetate + H(+). It functions in the pathway amino-acid degradation; L-phenylalanine degradation; acetoacetate and fumarate from L-phenylalanine: step 4/6. Its function is as follows. Involved in the catabolism of homogentisate (2,5-dihydroxyphenylacetate or 2,5-OH-PhAc), a central intermediate in the degradation of phenylalanine and tyrosine. Catalyzes the oxidative ring cleavage of the aromatic ring of homogentisate to yield maleylacetoacetate. The sequence is that of Homogentisate 1,2-dioxygenase from Rhizobium johnstonii (strain DSM 114642 / LMG 32736 / 3841) (Rhizobium leguminosarum bv. viciae).